The sequence spans 131 residues: Fumarate reductase subunit C (131 aa).

The next 3 helical transmembrane spans lie at 30-50 (EGTA…LFAL), 63-83 (FLQN…ALLH), and 109-129 (IIKS…FVAL).

It belongs to the FrdC family. As to quaternary structure, part of an enzyme complex containing four subunits: a flavoprotein (FrdA), an iron-sulfur protein (FrdB), and two hydrophobic anchor proteins (FrdC and FrdD).

It localises to the cell inner membrane. Its function is as follows. Two distinct, membrane-bound, FAD-containing enzymes are responsible for the catalysis of fumarate and succinate interconversion; fumarate reductase is used in anaerobic growth, and succinate dehydrogenase is used in aerobic growth. Anchors the catalytic components of the fumarate reductase complex to the cell inner membrane, binds quinones. The sequence is that of Fumarate reductase subunit C from Shigella dysenteriae serotype 1 (strain Sd197).